The following is an 810-amino-acid chain: MSHEKNEASGNPEAQSWKAQEAMLGVKTEVSRWRAVKNCLYRHLVKVLGEDWIFLLLLGALMALVSWAMDFIGSRGLRFYKYLFAMVEGNLGLQYLVWVCYPLILILFSSLFCQIVSPQAVGSGIPELKTIIRGAVLHEYLTLRTFVAKTVGLTVALSAGFPLGKEGPFVHIASICATLLNQLLCFISGRREEPYYLRADILTVGCALGISCCFGTPLAGVLFSIEVTCSHFGVRSYWRGFLGGAFSAFIFRVLSVWVKDTVTLTALFKTNFRGDIPFDLQELPAFAIIGIASGFFGALFVYLNRQIIVFMRKKNFVTKILKKQRLIYPAVVTFVLATLRFPPGVGQFFGAGLMPRETINSLFDNYTWTKTIDPRGLGNSAQWFIPHLNIFIVMALYFVMHFWMAALAVTMPVPCGAFVPVFNLGAVLGRFVGELMALLFPDGLVSNGNLYHILPGEYAVIGAAAMTGAVTHAVSTAVICFELTGQISHVLPMMVAVILANMVAQGLQPSLYDSIIQIKKLPYLPELSWSSANKYNIQVGDIMVRDVTSIASTSTYGDLLHVLRQTKLKFFPFVDTPETNTLLGSIERTEVEGLLQRRISAYRRQPATAAEAEEEGRNGERGASFTGDVPGEAETSFAYIDQEEAEGQQQREGLEAVKVQTEDPRPPSPVPAEEPTQTSGIYQKKHKGTGQVASRFEEMLTLEEIYQWEQREKNVVVNFETCRIDQSPFQLVEGTSLQKTHTLFSLLGLDRAYVTSMGKLVGVVALAEIQAAIEGSYQKGFRLPPPLASFRDAKNARNSGRTATSNSSGK.

Topologically, residues serine 2 to leucine 48 are cytoplasmic. Transmembrane regions (helical) follow at residues glycine 49–methionine 86 and leucine 93–valine 116. The Selectivity filter part_1 signature appears at glycine 122–proline 126. Position 123 (serine 123) interacts with chloride. The helical intramembrane region spans isoleucine 125–isoleucine 132. Helical transmembrane passes span leucine 141–glycine 160 and glutamate 166–leucine 184. A Selectivity filter part_2 motif is present at residues glycine 164–proline 168. 2 intramembrane regions (helical) span residues isoleucine 201–cysteine 213 and proline 217–isoleucine 225. 3 helical membrane-spanning segments follow: residues tyrosine 237–leucine 254, leucine 283–methionine 311, and isoleucine 320–leucine 339. N-linked (GlcNAc...) asparagine glycosylation occurs at asparagine 365. Transmembrane regions (helical) follow at residues asparagine 389–alanine 408 and glycine 416–leucine 439. Residues glycine 416–proline 420 carry the Selectivity filter part_3 motif. Chloride is bound at residue phenylalanine 418. Positions glycine 456–valine 470 form an intramembrane region, helical. The segment at residues threonine 471–histidine 472 is an intramembrane region (note=Loop between two helices). The segment at residues alanine 473–threonine 484 is an intramembrane region (helical). An intramembrane region (note=Loop between two helices) is located at residues glycine 485–histidine 489. The chain crosses the membrane as a helical span at residues valine 490–glycine 506. Residues leucine 507–lysine 810 are Cytoplasmic-facing. Tyrosine 512 contacts chloride. The CBS 1 domain occupies methionine 543 to alanine 601. Disordered regions lie at residues arginine 604–glycine 631 and lysine 658–glycine 688. A CBS 2 domain is found at isoleucine 724–phenylalanine 781.

It belongs to the chloride channel (TC 2.A.49) family. ClC-0 subfamily. Homodimer. Each subunit has channel activity ('Double barreled channel').

It is found in the membrane. Voltage-gated chloride channel. This channel is thought to ensure the high conductance of the non-innervated membrane of the electrocyte necessary for efficient current generation caused by sodium influx through the acetylcholine receptor at the innervated membrane. The sequence is that of Chloride channel protein from Tetronarce californica (Pacific electric ray).